The primary structure comprises 867 residues: DNA mismatch repair protein MutS (867 aa).

Residue 606-613 participates in ATP binding; that stretch reads GPNMSGKS.

Belongs to the DNA mismatch repair MutS family.

This protein is involved in the repair of mismatches in DNA. It is possible that it carries out the mismatch recognition step. This protein has a weak ATPase activity. The sequence is that of DNA mismatch repair protein MutS from Oceanobacillus iheyensis (strain DSM 14371 / CIP 107618 / JCM 11309 / KCTC 3954 / HTE831).